We begin with the raw amino-acid sequence, 218 residues long: Octanoyltransferase (218 aa).

One can recognise a BPL/LPL catalytic domain in the interval 30–213 (GEIEDTLILV…YFSEVFNYDI (184 aa)). Residues 75–82 (RGGDVTYH), 143–145 (AIG), and 156–158 (GFA) each bind substrate. Residue C174 is the Acyl-thioester intermediate of the active site.

It belongs to the LipB family.

It localises to the cytoplasm. The catalysed reaction is octanoyl-[ACP] + L-lysyl-[protein] = N(6)-octanoyl-L-lysyl-[protein] + holo-[ACP] + H(+). It participates in protein modification; protein lipoylation via endogenous pathway; protein N(6)-(lipoyl)lysine from octanoyl-[acyl-carrier-protein]: step 1/2. Its function is as follows. Catalyzes the transfer of endogenously produced octanoic acid from octanoyl-acyl-carrier-protein onto the lipoyl domains of lipoate-dependent enzymes. Lipoyl-ACP can also act as a substrate although octanoyl-ACP is likely to be the physiological substrate. The sequence is that of Octanoyltransferase from Alkaliphilus metalliredigens (strain QYMF).